The chain runs to 620 residues: 1-deoxy-D-xylulose-5-phosphate synthase (620 aa).

Thiamine diphosphate-binding positions include H75 and 116–118 (AHS). Mg(2+) is bound at residue D147. Thiamine diphosphate contacts are provided by residues 148–149 (GA), N177, Y284, and E366. N177 provides a ligand contact to Mg(2+).

The protein belongs to the transketolase family. DXPS subfamily. As to quaternary structure, homodimer. Mg(2+) is required as a cofactor. The cofactor is thiamine diphosphate.

The enzyme catalyses D-glyceraldehyde 3-phosphate + pyruvate + H(+) = 1-deoxy-D-xylulose 5-phosphate + CO2. Its pathway is metabolic intermediate biosynthesis; 1-deoxy-D-xylulose 5-phosphate biosynthesis; 1-deoxy-D-xylulose 5-phosphate from D-glyceraldehyde 3-phosphate and pyruvate: step 1/1. Its function is as follows. Catalyzes the acyloin condensation reaction between C atoms 2 and 3 of pyruvate and glyceraldehyde 3-phosphate to yield 1-deoxy-D-xylulose-5-phosphate (DXP). This Bordetella avium (strain 197N) protein is 1-deoxy-D-xylulose-5-phosphate synthase.